We begin with the raw amino-acid sequence, 211 residues long: Ras-related protein RABB1b (211 aa).

13–20 is a binding site for GTP; that stretch reads GDTGVGKS. The short motif at 35 to 43 is the Effector region element; sequence HDLTIGVEF. GTP-binding positions include 61 to 65, 119 to 122, and 149 to 150; these read DTAGQ, NKCD, and SA. Residues Cys-209 and Cys-210 are each lipidated (S-geranylgeranyl cysteine).

This sequence belongs to the small GTPase superfamily. Rab family.

The protein resides in the cell membrane. In terms of biological role, intracellular vesicle trafficking and protein transport. This chain is Ras-related protein RABB1b (RABB1B), found in Arabidopsis thaliana (Mouse-ear cress).